We begin with the raw amino-acid sequence, 294 residues long: Phosphoribosylaminoimidazole-succinocarboxamide synthase (294 aa).

This sequence belongs to the SAICAR synthetase family.

The enzyme catalyses 5-amino-1-(5-phospho-D-ribosyl)imidazole-4-carboxylate + L-aspartate + ATP = (2S)-2-[5-amino-1-(5-phospho-beta-D-ribosyl)imidazole-4-carboxamido]succinate + ADP + phosphate + 2 H(+). The protein operates within purine metabolism; IMP biosynthesis via de novo pathway; 5-amino-1-(5-phospho-D-ribosyl)imidazole-4-carboxamide from 5-amino-1-(5-phospho-D-ribosyl)imidazole-4-carboxylate: step 1/2. This is Phosphoribosylaminoimidazole-succinocarboxamide synthase from Thermoplasma volcanium (strain ATCC 51530 / DSM 4299 / JCM 9571 / NBRC 15438 / GSS1).